The primary structure comprises 559 residues: CRISPR-associated exonuclease Cas4/endonuclease Cas1 fusion (559 aa).

A CRISPR-associated exonuclease Cas4 region spans residues 1-198 (MAETDGSIPL…RCSLVGICLP (198 aa)). A [4Fe-4S] cluster-binding site is contributed by C22. Mn(2+)-binding residues include D87 and D100. 3 residues coordinate [4Fe-4S] cluster: C187, C190, and C196. Positions 224–559 (LYVQSPKAYV…IPAYPNFVTR (336 aa)) are CRISPR-associated endonuclease Cas1. Residues E380, H451, and E466 each coordinate Mn(2+).

It in the N-terminal section; belongs to the CRISPR-associated exonuclease Cas4 family. This sequence in the C-terminal section; belongs to the CRISPR-associated endonuclease Cas1 family. As to quaternary structure, homodimer, forms a heterotetramer with a Cas2 homodimer. The cofactor is [4Fe-4S] cluster. Requires Mg(2+) as cofactor. Mn(2+) is required as a cofactor.

It carries out the reaction exonucleolytic cleavage in the 5'- to 3'-direction to yield nucleoside 3'-phosphates.. In terms of biological role, CRISPR (clustered regularly interspaced short palindromic repeat), is an adaptive immune system that provides protection against mobile genetic elements (viruses, transposable elements and conjugative plasmids). CRISPR clusters contain spacers, sequences complementary to antecedent mobile elements, and target invading nucleic acids. CRISPR clusters are transcribed and processed into CRISPR RNA (crRNA). The Cas4 region acts as a ssDNA exonuclease, while the Cas1 region acts as a dsDNA endonuclease. Involved in the integration of spacer DNA into the CRISPR cassette. This is CRISPR-associated exonuclease Cas4/endonuclease Cas1 fusion (cas4-cas1) from Geobacter sulfurreducens (strain ATCC 51573 / DSM 12127 / PCA).